The sequence spans 566 residues: Glucose starvation modulator protein 1 (566 aa).

Residues 20–48 (CVFCHQKHLQCSNERPCKNCVKRNIAHGC) constitute a DNA-binding region (zn(2)-C6 fungal-type). Disordered stretches follow at residues 63–92 (GVPG…SPMD) and 250–270 (KQAS…NTLS). A compositionally biased stretch (low complexity) spans 253 to 270 (SPSPSNTSTSENNTNTLS).

The protein belongs to the ERT1/acuK family.

The protein resides in the nucleus. Functionally, transcription factor which regulates nonfermentable carbon utilization. The chain is Glucose starvation modulator protein 1 (GSM1) from Candida albicans (strain WO-1) (Yeast).